The primary structure comprises 493 residues: Ketol-acid reductoisomerase (NADP(+)) (493 aa).

A KARI N-terminal Rossmann domain is found at 17-208 (LGKCRFMKRE…GGDRAGVLES (192 aa)). NADP(+) is bound by residues 45-48 (CGAQ), R68, R76, S78, and 108-110 (DKQ). H132 is an active-site residue. Residue G158 coordinates NADP(+). KARI C-terminal knotted domains lie at 209–353 (SFIA…SEQE) and 354–486 (YYDK…MTDM). Mg(2+) is bound by residues D217, E221, E389, and E393. Substrate is bound at residue S414.

The protein belongs to the ketol-acid reductoisomerase family. Requires Mg(2+) as cofactor.

The catalysed reaction is (2R)-2,3-dihydroxy-3-methylbutanoate + NADP(+) = (2S)-2-acetolactate + NADPH + H(+). It catalyses the reaction (2R,3R)-2,3-dihydroxy-3-methylpentanoate + NADP(+) = (S)-2-ethyl-2-hydroxy-3-oxobutanoate + NADPH + H(+). It participates in amino-acid biosynthesis; L-isoleucine biosynthesis; L-isoleucine from 2-oxobutanoate: step 2/4. The protein operates within amino-acid biosynthesis; L-valine biosynthesis; L-valine from pyruvate: step 2/4. Its function is as follows. Involved in the biosynthesis of branched-chain amino acids (BCAA). Catalyzes an alkyl-migration followed by a ketol-acid reduction of (S)-2-acetolactate (S2AL) to yield (R)-2,3-dihydroxy-isovalerate. In the isomerase reaction, S2AL is rearranged via a Mg-dependent methyl migration to produce 3-hydroxy-3-methyl-2-ketobutyrate (HMKB). In the reductase reaction, this 2-ketoacid undergoes a metal-dependent reduction by NADPH to yield (R)-2,3-dihydroxy-isovalerate. In Colwellia psychrerythraea (strain 34H / ATCC BAA-681) (Vibrio psychroerythus), this protein is Ketol-acid reductoisomerase (NADP(+)).